A 201-amino-acid chain; its full sequence is MTDQGENEKKQRRSNATIAVACLSFFVCMIGAAYASVPLYRIFCQVTGYGGTTQRVEQYSDTILDKTIKVRFDANIANGLPWDFKPMQREVTVRIGETTMIKYEAHNLFGEETYGRASFNVAPGRAGAYFNKVECFCFTDNTLKPGEDLELPVVFFVDPEFVNDPDLKDVKTITLSYTFFPIDKPKPVVNAKAVGSTRNGG.

Residues 1–13 (MTDQGENEKKQRR) lie on the Cytoplasmic side of the membrane. A helical; Signal-anchor for type II membrane protein membrane pass occupies residues 14 to 36 (SNATIAVACLSFFVCMIGAAYAS). Over 37 to 201 (VPLYRIFCQV…KAVGSTRNGG (165 aa)) the chain is Periplasmic.

It belongs to the COX11/CtaG family.

It localises to the cell inner membrane. Functionally, exerts its effect at some terminal stage of cytochrome c oxidase synthesis, probably by being involved in the insertion of the copper B into subunit I. The protein is Cytochrome c oxidase assembly protein CtaG of Brucella suis (strain ATCC 23445 / NCTC 10510).